A 364-amino-acid chain; its full sequence is Rhomboid domain-containing protein 2 (364 aa).

The next 5 helical transmembrane spans lie at 11 to 31 (WCLCPEVPSATFFTALLSLLV), 63 to 83 (LVTYIFVYENPISLLCGAIII), 100 to 120 (CFFTVIFAIFSAIIFLSFEAV), 158 to 178 (FGMVVPSVLVPWLLLGASWLI), and 184 to 204 (LSNVCGLSIGLAYGLTYCYSI). Disordered stretches follow at residues 242-282 (AQSR…KLAS) and 317-364 (SSVY…VPMP). Composition is skewed to polar residues over residues 267–276 (HPVSQTQHAS) and 317–329 (SSVYPASAGTSLG).

It belongs to the peptidase S54 family.

The protein resides in the golgi apparatus. It localises to the cis-Golgi network membrane. The protein is Rhomboid domain-containing protein 2 (RHBDD2) of Homo sapiens (Human).